We begin with the raw amino-acid sequence, 267 residues long: Phosphatidylglycerol--prolipoprotein diacylglyceryl transferase (267 aa).

Transmembrane regions (helical) follow at residues 10–30 (VAIA…VVGF), 54–74 (LLFY…ALFY), 90–110 (WDGG…AWLF), and 116–136 (LAFF…LGAG). Arginine 137 lines the a 1,2-diacyl-sn-glycero-3-phospho-(1'-sn-glycerol) pocket. 3 consecutive transmembrane segments (helical) span residues 169 to 189 (PSPL…LWWV), 197 to 217 (GMIS…VEFV), and 231 to 251 (WLTM…ALCV).

Belongs to the Lgt family.

It localises to the cell inner membrane. It catalyses the reaction L-cysteinyl-[prolipoprotein] + a 1,2-diacyl-sn-glycero-3-phospho-(1'-sn-glycerol) = an S-1,2-diacyl-sn-glyceryl-L-cysteinyl-[prolipoprotein] + sn-glycerol 1-phosphate + H(+). It participates in protein modification; lipoprotein biosynthesis (diacylglyceryl transfer). Its function is as follows. Catalyzes the transfer of the diacylglyceryl group from phosphatidylglycerol to the sulfhydryl group of the N-terminal cysteine of a prolipoprotein, the first step in the formation of mature lipoproteins. The chain is Phosphatidylglycerol--prolipoprotein diacylglyceryl transferase from Chromohalobacter salexigens (strain ATCC BAA-138 / DSM 3043 / CIP 106854 / NCIMB 13768 / 1H11).